The primary structure comprises 262 residues: MGRKVHPIGFRLGYIKDWQSKWFAERNYTELLHEDVMLRKIIAKELENAGVARIEIERSANKVEVTVYTAKPGIVIGKRGAKVDELRAELEKRTGKKVKLNIQEIHQPELEAQLVAESIAEQINKRVSYKRAMKQAVQRAMRLGAQGVKIKCSGRLAGAEMARVAWERDGRVPLHTLRADIDYAQVHAHTTYGRIGVKVWIYKGEVFPDQKGQTQLPQPAVAAARPGLTVEEEERPQRKGGRGGRGANAGAARGGRGGRSRS.

A KH type-2 domain is found at 38 to 106; the sequence is LRKIIAKELE…KVKLNIQEIH (69 aa). The segment at 211–262 is disordered; that stretch reads KGQTQLPQPAVAAARPGLTVEEEERPQRKGGRGGRGANAGAARGGRGGRSRS. Over residues 243 to 255 the composition is skewed to gly residues; the sequence is GGRGANAGAARGG.

It belongs to the universal ribosomal protein uS3 family. In terms of assembly, part of the 30S ribosomal subunit. Forms a tight complex with proteins S10 and S14.

Binds the lower part of the 30S subunit head. Binds mRNA in the 70S ribosome, positioning it for translation. The protein is Small ribosomal subunit protein uS3 of Roseiflexus sp. (strain RS-1).